A 295-amino-acid polypeptide reads, in one-letter code: Formamidopyrimidine-DNA glycosylase (295 aa).

The Schiff-base intermediate with DNA role is filled by proline 2. Catalysis depends on glutamate 3, which acts as the Proton donor. Lysine 61 serves as the catalytic Proton donor; for beta-elimination activity. DNA-binding residues include histidine 95, arginine 117, and arginine 159. Residues 245-279 form an FPG-type zinc finger; the sequence is HAYGREGEACERCGTPIRRVAFMNRSSYFCPVCQP. Arginine 269 serves as the catalytic Proton donor; for delta-elimination activity.

Belongs to the FPG family. In terms of assembly, monomer. It depends on Zn(2+) as a cofactor.

It carries out the reaction Hydrolysis of DNA containing ring-opened 7-methylguanine residues, releasing 2,6-diamino-4-hydroxy-5-(N-methyl)formamidopyrimidine.. It catalyses the reaction 2'-deoxyribonucleotide-(2'-deoxyribose 5'-phosphate)-2'-deoxyribonucleotide-DNA = a 3'-end 2'-deoxyribonucleotide-(2,3-dehydro-2,3-deoxyribose 5'-phosphate)-DNA + a 5'-end 5'-phospho-2'-deoxyribonucleoside-DNA + H(+). Involved in base excision repair of DNA damaged by oxidation or by mutagenic agents. Acts as a DNA glycosylase that recognizes and removes damaged bases. Has a preference for oxidized purines, such as 7,8-dihydro-8-oxoguanine (8-oxoG). Has AP (apurinic/apyrimidinic) lyase activity and introduces nicks in the DNA strand. Cleaves the DNA backbone by beta-delta elimination to generate a single-strand break at the site of the removed base with both 3'- and 5'-phosphates. In Nocardioides sp. (strain ATCC BAA-499 / JS614), this protein is Formamidopyrimidine-DNA glycosylase.